An 86-amino-acid chain; its full sequence is Small ribosomal subunit protein uS17 (86 aa).

This sequence belongs to the universal ribosomal protein uS17 family. In terms of assembly, part of the 30S ribosomal subunit.

In terms of biological role, one of the primary rRNA binding proteins, it binds specifically to the 5'-end of 16S ribosomal RNA. The chain is Small ribosomal subunit protein uS17 from Marinomonas sp. (strain MWYL1).